The following is a 170-amino-acid chain: Fimbrial protein (170 aa).

The propeptide at 1–7 (MNTLQKG) is leader sequence. At Phe-8 the chain carries N-methylphenylalanine. The chain crosses the membrane as a helical span at residues 8-28 (FTLIELMIVIAIVGILAAVAL). The O-linked (Gal...) serine glycan is linked to Ser-70. Ser-100 is modified (O-(sn-1-glycerophosphoryl)serine). A disulfide bridge links Cys-127 with Cys-163.

Belongs to the N-Me-Phe pilin family. The pili are polar flexible filaments of about 5.4 nanometers diameter and 2.5 micrometers average length; they consist of only a single polypeptide chain arranged in a helical configuration of five subunits per turn in the assembled pilus. Post-translationally, O-linked glycan has been reported to consist either of the Gal(alpha1-3) GlcNAc disaccharide, or the Gal(beta 1-4) Gal(alpha 1-3) 2,4-diacetamido-2,4,6-trideoxyhexose trisaccharide.

Its subcellular location is the fimbrium. It is found in the membrane. Major component of the type IV pilus (T4P) that plays a role in cellular adherence, microcolony formation as well as twitching motility. In Neisseria meningitidis serogroup B (strain ATCC BAA-335 / MC58), this protein is Fimbrial protein (pilE).